Here is a 385-residue protein sequence, read N- to C-terminus: NADH-quinone oxidoreductase subunit D 2 (385 aa).

It belongs to the complex I 49 kDa subunit family. In terms of assembly, NDH-1 is composed of 14 different subunits. Subunits NuoB, C, D, E, F, and G constitute the peripheral sector of the complex.

The protein localises to the cell membrane. The catalysed reaction is a quinone + NADH + 5 H(+)(in) = a quinol + NAD(+) + 4 H(+)(out). Functionally, NDH-1 shuttles electrons from NADH, via FMN and iron-sulfur (Fe-S) centers, to quinones in the respiratory chain. The immediate electron acceptor for the enzyme in this species is believed to be a menaquinone. Couples the redox reaction to proton translocation (for every two electrons transferred, four hydrogen ions are translocated across the cytoplasmic membrane), and thus conserves the redox energy in a proton gradient. This chain is NADH-quinone oxidoreductase subunit D 2, found in Salinispora arenicola (strain CNS-205).